Reading from the N-terminus, the 222-residue chain is Putative cobalt transport protein CbiM (222 aa).

Transmembrane regions (helical) follow at residues 8-28, 43-63, 75-95, 107-127, 134-154, and 178-198; these read LPME…GYGI, PLLA…LPSV, LGAI…VLLF, TLGA…YLVF, LNIT…TYLT, and IFAI…ALLW.

It belongs to the CbiM family. In terms of assembly, forms an energy-coupling factor (ECF) transporter complex composed of an ATP-binding protein (A component, CbiO), a transmembrane protein (T component, CbiQ) and 2 possible substrate-capture proteins (S components, CbiM and CbiN) of unknown stoichimetry.

The protein localises to the cell membrane. It participates in cofactor biosynthesis; adenosylcobalamin biosynthesis. Functionally, part of the energy-coupling factor (ECF) transporter complex CbiMNOQ involved in cobalt import. The polypeptide is Putative cobalt transport protein CbiM (Methanococcus voltae (strain ATCC BAA-1334 / A3)).